Consider the following 369-residue polypeptide: MFYWLYEQFAASGYVPILNLLKYQTFRTGLAIFTAQFVVVAMGSRFIRWMQAKQGKGQPIRAEGIERHVIEKAGTPTMGGVMILAGLLVGTLLWSDLSNPYVWAVVLVTAGYGLLGFTDDYAKVTRQTTAGVSGKIRLALEAFIAMAAVLIIIVFAQKPPENPELLTSVTFPIFKQYFVDLSWGYLLFGAFIIVGAANAVNFTDGLDGLATVPVMIAAAAYGLIAYLVGNYVFSNYLQLHFVPGVGEIAVFCGALIGSGLGFLWYNAPPAKIFMGDTGSLALGGAVGAVAVATRHEIVLAIIGGLFVAETLSVIIQVAWFKRTGRRIFLMAPIHHHFEKLGWSESTVVIRFWIVAIMLALVGLATLKLR.

10 consecutive transmembrane segments (helical) span residues 30–50 (LAIF…IRWM), 74–94 (GTPT…TLLW), 97–117 (LSNP…LLGF), 136–156 (IRLA…IVFA), 177–197 (YFVD…VGAA), 208–228 (GLAT…AYLV), 244–264 (GVGE…GFLW), 272–292 (IFMG…VAVA), 297–317 (IVLA…IIQV), and 346–366 (TVVI…LATL).

The protein belongs to the glycosyltransferase 4 family. MraY subfamily. Mg(2+) serves as cofactor.

The protein localises to the cell inner membrane. The catalysed reaction is UDP-N-acetyl-alpha-D-muramoyl-L-alanyl-gamma-D-glutamyl-meso-2,6-diaminopimeloyl-D-alanyl-D-alanine + di-trans,octa-cis-undecaprenyl phosphate = di-trans,octa-cis-undecaprenyl diphospho-N-acetyl-alpha-D-muramoyl-L-alanyl-D-glutamyl-meso-2,6-diaminopimeloyl-D-alanyl-D-alanine + UMP. Its pathway is cell wall biogenesis; peptidoglycan biosynthesis. In terms of biological role, catalyzes the initial step of the lipid cycle reactions in the biosynthesis of the cell wall peptidoglycan: transfers peptidoglycan precursor phospho-MurNAc-pentapeptide from UDP-MurNAc-pentapeptide onto the lipid carrier undecaprenyl phosphate, yielding undecaprenyl-pyrophosphoryl-MurNAc-pentapeptide, known as lipid I. The sequence is that of Phospho-N-acetylmuramoyl-pentapeptide-transferase from Phenylobacterium zucineum (strain HLK1).